A 203-amino-acid polypeptide reads, in one-letter code: Protein GrpE (203 aa).

Residues 1–10 are compositionally biased toward basic and acidic residues; it reads MSNESIKAEQ. The segment at 1–20 is disordered; sequence MSNESIKAEQDLIQEGVESE.

Belongs to the GrpE family. In terms of assembly, homodimer.

The protein resides in the cytoplasm. Its function is as follows. Participates actively in the response to hyperosmotic and heat shock by preventing the aggregation of stress-denatured proteins, in association with DnaK and GrpE. It is the nucleotide exchange factor for DnaK and may function as a thermosensor. Unfolded proteins bind initially to DnaJ; upon interaction with the DnaJ-bound protein, DnaK hydrolyzes its bound ATP, resulting in the formation of a stable complex. GrpE releases ADP from DnaK; ATP binding to DnaK triggers the release of the substrate protein, thus completing the reaction cycle. Several rounds of ATP-dependent interactions between DnaJ, DnaK and GrpE are required for fully efficient folding. The sequence is that of Protein GrpE from Shewanella sp. (strain MR-7).